Here is a 171-residue protein sequence, read N- to C-terminus: Probable chorismate pyruvate-lyase (171 aa).

Residues Met-36, Arg-78, Leu-116, and Glu-157 each coordinate substrate.

This sequence belongs to the UbiC family.

It is found in the cytoplasm. It catalyses the reaction chorismate = 4-hydroxybenzoate + pyruvate. Its pathway is cofactor biosynthesis; ubiquinone biosynthesis. Removes the pyruvyl group from chorismate, with concomitant aromatization of the ring, to provide 4-hydroxybenzoate (4HB) for the ubiquinone pathway. In Bartonella bacilliformis (strain ATCC 35685 / KC583 / Herrer 020/F12,63), this protein is Probable chorismate pyruvate-lyase.